The following is a 431-amino-acid chain: Adenylosuccinate synthetase (431 aa).

GTP contacts are provided by residues 13–19 and 41–43; these read GDEGKGK and GHT. Asp-14 serves as the catalytic Proton acceptor. The Mg(2+) site is built by Asp-14 and Gly-41. Residues 14-17, 39-42, Thr-130, Arg-144, Gln-225, Thr-240, and Arg-304 contribute to the IMP site; these read DEGK and NAGH. The active-site Proton donor is His-42. 300-306 is a binding site for substrate; it reads TTTGRSR. GTP contacts are provided by residues Arg-306, 332–334, and 414–416; these read KLD and STG.

The protein belongs to the adenylosuccinate synthetase family. As to quaternary structure, homodimer. It depends on Mg(2+) as a cofactor.

The protein resides in the cytoplasm. The enzyme catalyses IMP + L-aspartate + GTP = N(6)-(1,2-dicarboxyethyl)-AMP + GDP + phosphate + 2 H(+). The protein operates within purine metabolism; AMP biosynthesis via de novo pathway; AMP from IMP: step 1/2. In terms of biological role, plays an important role in the de novo pathway of purine nucleotide biosynthesis. Catalyzes the first committed step in the biosynthesis of AMP from IMP. This chain is Adenylosuccinate synthetase, found in Marinobacter nauticus (strain ATCC 700491 / DSM 11845 / VT8) (Marinobacter aquaeolei).